Reading from the N-terminus, the 1314-residue chain is MDFFNLNNNNNNNNTTTTTTTTNNNNTNNNNTNNNNNPANNTNNNNSTGHSSNTNNNTNNNNTNTGASGVDDFQNFFDPKPFDQNLDSNNNNSNSNNNDNNNSNTVASSTNFTSPTAVVNNAAPANVTGGKAANFIQNQSPQFNSPYDSNNSNTNLNSLSPQAILAKNSIIDSSNLPLQAQQQLYGGNNNNNSTGIANDNVITPHFITNVQSISQNSSSSTPNTNSNSTPNANQQFLPFNNSASNNGNLTSNQLISNYAASNSMDRSSSASNEFVPNTSDNNNNSNNHNMRNNSNNKTSNNNNVTAVPAATPANTNNSTSNANTVFSERAAMFAALQQKQQQRFQALQQQQQQQQNQQQQNQQPQQQQQQQQNPKFLQSQRQQQQRSILQSLNPALQEKISTELNNKQYELFMKSLIENCKKRNMPLQSIPEIGNRKINLFYLYMLVQKFGGADQVTRTQQWSMVAQRLQISDYQQLESIYFRILLPYERHMISQEGIKETQAKRIFLQQFLQELLKKVQQQQQAAALANANNNINSASSAPTPAAPGASVPATAAPGTEAGIVPVSANTPKSLNSNININVNNNNIGQQQVKKPRKQRVKKKTKKELELERKEREDFQKRQQKLLEDQQRQQKLLLETKLRQQYEIELKKLPKVYKRSIVRNYKPLINRLKHYNGYDINYISKIGEKIDSNKPIFLFAPELGAINLHALSMSLQSKNLGEINTALNTLLVTSADSNLKISLVKYPELLDSLAILGMNLLSNLSQNVVPYHRNTSDYYYEDAGSNQYYVTQHDKMVDKIFEKVNNNATLTPNDSNDEKVTILVDSLTGNQLPTPTPTEMEPDLDTECFISMQSTSPAVKQWDLLPEPIRFLPNQFPLKIHRTPYLTSLKKIKDEIDDPFTKINTRGAEDPKVLINDQLSTISMILRNISFSDNNSRIMSRNFYLKRFISDLLWLVLIHPENFTCNRKILNFKKDLVIVLSNISHLLEIASSIDCLLILILVISFGQPKLNPMASSSSFGSESLTFNEFQLQWGKYQTFGVDILAKLFSLEKPNLNYFKSILLNKNTGNNLYDRNSNNNHKDKKLLRRLLNLYNDNNKNNNNRHNLLNDVVSFLFSAIPLQQVLSQSADPSLLIDQFSPVISQSLTSILVIVQKILPLSNEVFEISENNSDSNSNNNGNKDSSFNFNKNLPFVWLSSEENIGSGLLKLSEIILNINNSTSKNTLLQQQNYSKVLLPSINISCVQLIKCLVEKSICFENCLNNDPEILKKIASIPNLFPTDLEIFQLFTNPSVDIQIINQYQLLYNLKNDILTNLE.

3 stretches are compositionally biased toward low complexity: residues Met1–Thr65, Ser88–Phe112, and Ile213–Gln235. Disordered regions lie at residues Met1–Phe112, Ile213–Thr250, Asn262–Asn321, and Gln355–Gln384. The tract at residues Met1–Asn323 is prion domain (PrD). Residues Phe236 to Thr250 are compositionally biased toward polar residues. The ARID domain occupies Asn406–Ile493. A compositionally biased stretch (low complexity) spans Asn581–Val592. Residues Asn581–Asp617 are disordered. The segment covering Lys593 to Lys605 has biased composition (basic residues). Residues Lys606 to Asp617 are compositionally biased toward basic and acidic residues. The segment at Cys1241 to Cys1258 adopts a C4-type zinc-finger fold.

This sequence belongs to the SWI1 family. Component of the SWI/SNF global transcription activator complex. The 1.14 MDa SWI/SNF complex is composed of 11 different subunits: one copy each of SWI1, SNF2/SWI2, SNF5, SNF12/SWP73, ARP7/SWP61, ARP9/SWP59; two copies each of SWI3, SNF6, SNF11, SWP82; and three copies of TAF14/SWP29.

It is found in the nucleus. Involved in transcriptional activation. Component of the SWI/SNF complex, an ATP-dependent chromatin remodeling complex, which is required for the positive and negative regulation of gene expression of a large number of genes. It changes chromatin structure by altering DNA-histone contacts within a nucleosome, leading eventually to a change in nucleosome position, thus facilitating or repressing binding of gene-specific transcription factors. The sequence is that of SWI/SNF chromatin-remodeling complex subunit SWI1 (SWI1) from Saccharomyces cerevisiae (strain ATCC 204508 / S288c) (Baker's yeast).